The following is a 362-amino-acid chain: tRNA N6-adenosine threonylcarbamoyltransferase (362 aa).

Positions 120 and 124 each coordinate Fe cation. Substrate contacts are provided by residues 142–146 (LASGG), Asp-175, Gly-188, and Asn-288. Asp-316 provides a ligand contact to Fe cation. A compositionally biased stretch (basic and acidic residues) spans 342–351 (RPRWPLDPDA). Positions 342 to 362 (RPRWPLDPDAPKAAGAGGVKA) are disordered.

This sequence belongs to the KAE1 / TsaD family. Fe(2+) is required as a cofactor.

Its subcellular location is the cytoplasm. The catalysed reaction is L-threonylcarbamoyladenylate + adenosine(37) in tRNA = N(6)-L-threonylcarbamoyladenosine(37) in tRNA + AMP + H(+). In terms of biological role, required for the formation of a threonylcarbamoyl group on adenosine at position 37 (t(6)A37) in tRNAs that read codons beginning with adenine. Is involved in the transfer of the threonylcarbamoyl moiety of threonylcarbamoyl-AMP (TC-AMP) to the N6 group of A37, together with TsaE and TsaB. TsaD likely plays a direct catalytic role in this reaction. This chain is tRNA N6-adenosine threonylcarbamoyltransferase, found in Rhodospirillum rubrum (strain ATCC 11170 / ATH 1.1.1 / DSM 467 / LMG 4362 / NCIMB 8255 / S1).